The following is a 61-amino-acid chain: Small ribosomal subunit protein uS14 (61 aa).

Positions 24, 27, 40, and 43 each coordinate Zn(2+).

The protein belongs to the universal ribosomal protein uS14 family. Zinc-binding uS14 subfamily. In terms of assembly, part of the 30S ribosomal subunit. Contacts proteins S3 and S10. Zn(2+) serves as cofactor.

Binds 16S rRNA, required for the assembly of 30S particles and may also be responsible for determining the conformation of the 16S rRNA at the A site. The protein is Small ribosomal subunit protein uS14 of Borrelia hermsii (strain HS1 / DAH).